Here is a 193-residue protein sequence, read N- to C-terminus: ECF RNA polymerase sigma factor SigK (193 aa).

Positions 35–101 (LYDRTRSRVY…RRAVDRVRSE (67 aa)) are sigma-70 factor domain-2. Positions 59–62 (ETTQ) match the Polymerase core binding motif. Positions 140–187 (MGSLSDLQREAIQLAYYEGLTYVQVSERLSANLATIKSRMRGGIRGLK) are sigma-70 factor domain-4. Positions 161 to 180 (YVQVSERLSANLATIKSRMR) form a DNA-binding region, H-T-H motif.

It belongs to the sigma-70 factor family. ECF subfamily. As to quaternary structure, interacts transiently with the RNA polymerase catalytic core formed by RpoA, RpoB, RpoC and RpoZ (2 alpha, 1 beta, 1 beta' and 1 omega subunit) to form the RNA polymerase holoenzyme that can initiate transcription. Interacts (via sigma-70 factor domain 4) with anti-sigma-K factor RskA.

Functionally, sigma factors are initiation factors that promote the attachment of RNA polymerase to specific initiation sites and are then released. Extracytoplasmic function (ECF) sigma factors are held in an inactive form by an anti-sigma factor until released by regulated intramembrane proteolysis. The chain is ECF RNA polymerase sigma factor SigK (sigK) from Mycobacterium sp. (strain KMS).